Here is a 287-residue protein sequence, read N- to C-terminus: Small ribosomal subunit protein uS3 (287 aa).

The KH type-2 domain occupies 38–106 (IRRLLATGLE…QVQLNILEVK (69 aa)). The disordered stretch occupies residues 216-287 (AAAPAGADRP…AETTTQNPGS (72 aa)). Residues 238 to 287 (SGASGTTATSTDAGRAASGTQEAPAAAEAAAGTEAAAGAAAETTTQNPGS) show a composition bias toward low complexity.

Belongs to the universal ribosomal protein uS3 family. Part of the 30S ribosomal subunit. Forms a tight complex with proteins S10 and S14.

Functionally, binds the lower part of the 30S subunit head. Binds mRNA in the 70S ribosome, positioning it for translation. In Mycobacterium sp. (strain JLS), this protein is Small ribosomal subunit protein uS3.